Reading from the N-terminus, the 357-residue chain is Dihydroorotate dehydrogenase (quinone) (357 aa).

FMN-binding positions include 65–69 (AGLDK) and Thr89. Lys69 provides a ligand contact to substrate. Residue 114-118 (NRFGF) coordinates substrate. Asn156 and Asn189 together coordinate FMN. Position 189 (Asn189) interacts with substrate. Catalysis depends on Ser192, which acts as the Nucleophile. Position 194 (Asn194) interacts with substrate. Residues Lys234 and Thr262 each coordinate FMN. 263–264 (NT) is a binding site for substrate. Residues Gly285, Gly314, and 335 to 336 (YT) contribute to the FMN site.

It belongs to the dihydroorotate dehydrogenase family. Type 2 subfamily. As to quaternary structure, monomer. The cofactor is FMN.

It is found in the cell membrane. It catalyses the reaction (S)-dihydroorotate + a quinone = orotate + a quinol. Its pathway is pyrimidine metabolism; UMP biosynthesis via de novo pathway; orotate from (S)-dihydroorotate (quinone route): step 1/1. Catalyzes the conversion of dihydroorotate to orotate with quinone as electron acceptor. This Albidiferax ferrireducens (strain ATCC BAA-621 / DSM 15236 / T118) (Rhodoferax ferrireducens) protein is Dihydroorotate dehydrogenase (quinone).